We begin with the raw amino-acid sequence, 349 residues long: Methionine import ATP-binding protein MetN (349 aa).

In terms of domain architecture, ABC transporter spans 5-245; that stretch reads IDLKNITVQF…PQKQLTRQFV (241 aa). 37 to 44 serves as a coordination point for ATP; sequence GFSGAGKS.

This sequence belongs to the ABC transporter superfamily. Methionine importer (TC 3.A.1.24) family. The complex is composed of two ATP-binding proteins (MetN), two transmembrane proteins (MetI) and a solute-binding protein (MetQ).

The protein localises to the cell membrane. The enzyme catalyses L-methionine(out) + ATP + H2O = L-methionine(in) + ADP + phosphate + H(+). It catalyses the reaction D-methionine(out) + ATP + H2O = D-methionine(in) + ADP + phosphate + H(+). Functionally, part of the ABC transporter complex MetNIQ involved in methionine import. Responsible for energy coupling to the transport system. This Lactobacillus johnsonii (strain CNCM I-12250 / La1 / NCC 533) protein is Methionine import ATP-binding protein MetN.